The following is a 317-amino-acid chain: Beta-ketoacyl-[acyl-carrier-protein] synthase III (317 aa).

Residues cysteine 112 and histidine 244 contribute to the active site. The tract at residues 245-249 (QANLR) is ACP-binding. The active site involves asparagine 274.

Belongs to the thiolase-like superfamily. FabH family. As to quaternary structure, homodimer.

The protein resides in the cytoplasm. It carries out the reaction malonyl-[ACP] + acetyl-CoA + H(+) = 3-oxobutanoyl-[ACP] + CO2 + CoA. Its pathway is lipid metabolism; fatty acid biosynthesis. Its function is as follows. Catalyzes the condensation reaction of fatty acid synthesis by the addition to an acyl acceptor of two carbons from malonyl-ACP. Catalyzes the first condensation reaction which initiates fatty acid synthesis and may therefore play a role in governing the total rate of fatty acid production. Possesses both acetoacetyl-ACP synthase and acetyl transacylase activities. Its substrate specificity determines the biosynthesis of branched-chain and/or straight-chain of fatty acids. The polypeptide is Beta-ketoacyl-[acyl-carrier-protein] synthase III (Pasteurella multocida (strain Pm70)).